Reading from the N-terminus, the 140-residue chain is Type II secretion system core protein G (140 aa).

A propeptide spans 1–6 (leader sequence); the sequence is MQRQRG. Phenylalanine 7 carries the N-methylphenylalanine modification. Residues 7-27 form a helical membrane-spanning segment; the sequence is FTLLEIMVVIVILGVLASLVV. The segment at 120–140 is disordered; that stretch reads LGPDGVPESNDDIGNWTIGKK.

Belongs to the GSP G family. As to quaternary structure, type II secretion system is composed of four main components: the outer membrane complex, the inner membrane complex, the cytoplasmic secretion ATPase and the periplasm-spanning pseudopilus. Forms homomultimers. Post-translationally, cleaved by the prepilin peptidase. In terms of processing, methylated by prepilin peptidase at the amino group of the N-terminal phenylalanine once the leader sequence is cleaved.

It localises to the cell inner membrane. Core component of the type II secretion system required for the energy-dependent secretion of extracellular factors such as proteases and toxins from the periplasm. Pseudopilin (pilin-like) protein that polymerizes to form the pseudopilus. Further polymerization triggers pseudopilus growth. The polypeptide is Type II secretion system core protein G (pulG) (Klebsiella pneumoniae).